We begin with the raw amino-acid sequence, 337 residues long: GTP 3',8-cyclase (337 aa).

Residues P17 to K243 form the Radical SAM core domain. Residue R26 participates in GTP binding. [4Fe-4S] cluster is bound by residues C33 and C37. An S-adenosyl-L-methionine-binding site is contributed by Y39. Residue C40 participates in [4Fe-4S] cluster binding. R76 contributes to the GTP binding site. G80 provides a ligand contact to S-adenosyl-L-methionine. T107 lines the GTP pocket. Position 131 (S131) interacts with S-adenosyl-L-methionine. K168 is a binding site for GTP. M202 serves as a coordination point for S-adenosyl-L-methionine. Residues C265 and C268 each coordinate [4Fe-4S] cluster. R270–R272 contacts GTP. C282 contributes to the [4Fe-4S] cluster binding site.

It belongs to the radical SAM superfamily. MoaA family. As to quaternary structure, monomer and homodimer. The cofactor is [4Fe-4S] cluster.

It catalyses the reaction GTP + AH2 + S-adenosyl-L-methionine = (8S)-3',8-cyclo-7,8-dihydroguanosine 5'-triphosphate + 5'-deoxyadenosine + L-methionine + A + H(+). Its pathway is cofactor biosynthesis; molybdopterin biosynthesis. Catalyzes the cyclization of GTP to (8S)-3',8-cyclo-7,8-dihydroguanosine 5'-triphosphate. The protein is GTP 3',8-cyclase of Haemophilus influenzae (strain PittGG).